Consider the following 510-residue polypeptide: Maturase K (510 aa).

It belongs to the intron maturase 2 family. MatK subfamily.

The protein resides in the plastid. It localises to the chloroplast. Functionally, usually encoded in the trnK tRNA gene intron. Probably assists in splicing its own and other chloroplast group II introns. The protein is Maturase K of Anomochloa marantoidea (Herbaceous bamboo).